A 1751-amino-acid chain; its full sequence is Non-reducing polyketide synthase afvB (1751 aa).

The N-terminal acylcarrier protein transacylase domain (SAT) stretch occupies residues 19-249 (FRRLRLHSKC…PLPVYGGPCH (231 aa)). Residues 381-811 (HEKIAVIGMS…GGNTSLLLEE (431 aa)) form the Ketosynthase family 3 (KS3) domain. Catalysis depends on for beta-ketoacyl synthase activity residues cysteine 554, histidine 689, and histidine 730. A malonyl-CoA:ACP transacylase (MAT) domain region spans residues 910 to 1228 (FVFSGQGSFS…SMSALHSAGV (319 aa)). Residues 1291-1607 (TALVHHILEE…PRILMSRFFD (317 aa)) are product template (PT) domain. Residues 1295–1429 (HHILEESFGK…GVVTCGDSHS (135 aa)) are N-terminal hotdog fold. The PKS/mFAS DH domain occupies 1295-1603 (HHILEESFGK…LRPLPRILMS (309 aa)). The active-site Proton acceptor; for dehydratase activity is histidine 1327. Residues 1456–1603 (LASRVSKDLV…LRPLPRILMS (148 aa)) are C-terminal hotdog fold. The active-site Proton donor; for dehydratase activity is aspartate 1514. The segment at 1610 to 1670 (DSQYGQMAQQ…KAPISGSWPN (61 aa)) is disordered. Positions 1612–1657 (QYGQMAQQEPSTALPSTPQHTSSAKTTESTPSQQDESDNTSLATPE) are enriched in polar residues. Residues 1670–1747 (NANSQLVRDA…DLKAYLEGNQ (78 aa)) enclose the Carrier domain. Residue serine 1707 is modified to O-(pantetheine 4'-phosphoryl)serine.

Requires pantetheine 4'-phosphate as cofactor. In terms of tissue distribution, expressed mainly in sclerotia, with expression levels 20-fold and 10-fold greater than the expression levels of this gene found in mycelium and conidia, respectively.

The protein operates within secondary metabolite biosynthesis. In terms of biological role, non-reducing polyketide synthase (NRPKS); part of the gene cluster that mediates the biosynthesis of aflavarin, a bicoumarin that exhibits anti-insectan activity against the fungivorous beetle C.hemipterus. Catalyzes the formation of the aromatic polyketide from acetyl coenzyme A and seven malonyl coenzyme A molecules. This Aspergillus flavus (strain ATCC 200026 / FGSC A1120 / IAM 13836 / NRRL 3357 / JCM 12722 / SRRC 167) protein is Non-reducing polyketide synthase afvB.